A 130-amino-acid polypeptide reads, in one-letter code: Cytochrome c oxidase subunit 13, mitochondrial (130 aa).

The N-terminal 31 residues, 1 to 31 (MSMMNRNIGFLSRTLKTSVPKRAGLLSFRAY), are a transit peptide targeting the mitochondrion. Over 32–61 (SNEAKVNWLEEVQAEEEHAKRSSEFWKKVT) the chain is Mitochondrial matrix. The chain crosses the membrane as a helical span at residues 62–80 (YYIGGPALILASANAYYIY). Topologically, residues 81–130 (CKHQEHAKHVEDTDPGYSFENLRFKKYPWGDGSKTLFWNDKVNHLKKDDE) are mitochondrial intermembrane.

Belongs to the cytochrome c oxidase subunit 6A family. Component of the cytochrome c oxidase (complex IV, CIV), a multisubunit enzyme composed of a catalytic core of 3 subunits and several supernumerary subunits. The complex exists as a monomer or a dimer and forms supercomplexes (SCs) in the inner mitochondrial membrane with ubiquinol-cytochrome c oxidoreductase (cytochrome b-c1 complex, complex III, CIII).

The protein resides in the mitochondrion inner membrane. The protein operates within energy metabolism; oxidative phosphorylation. Component of the cytochrome c oxidase, the last enzyme in the mitochondrial electron transport chain which drives oxidative phosphorylation. The respiratory chain contains 3 multisubunit complexes succinate dehydrogenase (complex II, CII), ubiquinol-cytochrome c oxidoreductase (cytochrome b-c1 complex, complex III, CIII) and cytochrome c oxidase (complex IV, CIV), that cooperate to transfer electrons derived from NADH and succinate to molecular oxygen, creating an electrochemical gradient over the inner membrane that drives transmembrane transport and the ATP synthase. Cytochrome c oxidase is the component of the respiratory chain that catalyzes the reduction of oxygen to water. Electrons originating from reduced cytochrome c in the intermembrane space (IMS) are transferred via the dinuclear copper A center (CU(A)) of subunit 2 and heme A of subunit 1 to the active site in subunit 1, a binuclear center (BNC) formed by heme A3 and copper B (CU(B)). The BNC reduces molecular oxygen to 2 water molecules unsing 4 electrons from cytochrome c in the IMS and 4 protons from the mitochondrial matrix. The protein is Cytochrome c oxidase subunit 13, mitochondrial (cox13) of Schizosaccharomyces pombe (strain 972 / ATCC 24843) (Fission yeast).